A 257-amino-acid polypeptide reads, in one-letter code: Fimbrial assembly protein, serogroup E1 (257 aa).

The sequence is that of Fimbrial assembly protein, serogroup E1 (fimB) from Dichelobacter nodosus (Bacteroides nodosus).